The following is a 29-amino-acid chain: uncharacterized protein (29 aa).

A helical membrane pass occupies residues 8-28 (FALIVVLFILLIIVGTAFVGG).

Belongs to the SscA family.

The protein resides in the membrane. This is an uncharacterized protein from Bacillus subtilis (strain 168).